Consider the following 57-residue polypeptide: UPF0391 membrane protein Xaut_1725 (57 aa).

Helical transmembrane passes span 4–24 (WAVTFLVVALIAAVLGFGGIA) and 30–50 (IAKIIFFVAIVLFVISAVAGL).

Belongs to the UPF0391 family.

The protein resides in the cell membrane. The chain is UPF0391 membrane protein Xaut_1725 from Xanthobacter autotrophicus (strain ATCC BAA-1158 / Py2).